The sequence spans 677 residues: O-fucosyltransferase 27 (677 aa).

A helical; Signal-anchor for type II membrane protein transmembrane segment spans residues 15 to 35 (WIGLLGLVLSAFSLLVHFLLA). N130 is a glycosylation site (N-linked (GlcNAc...) asparagine). The tract at residues 410–437 (PPSIEVETKHDSLKSTRQRPQPLPPPPA) is disordered. N542 and N592 each carry an N-linked (GlcNAc...) asparagine glycan. The segment at 619-677 (NAEKEEDLDEEDLSSSGLFFGHKESGGNNNGNNETVNSEANNKEEGQLEDQEELEGSER) is disordered. A compositionally biased stretch (acidic residues) spans 622–631 (KEEDLDEEDL). Positions 644-658 (GGNNNGNNETVNSEA) are enriched in low complexity. N-linked (GlcNAc...) asparagine glycosylation is present at N651. Residues 665–677 (QLEDQEELEGSER) are compositionally biased toward acidic residues.

It belongs to the glycosyltransferase GT106 family.

Its subcellular location is the membrane. Its pathway is glycan metabolism. The chain is O-fucosyltransferase 27 from Arabidopsis thaliana (Mouse-ear cress).